Reading from the N-terminus, the 651-residue chain is LysM domain receptor-like kinase 3 (651 aa).

Residues methionine 1–serine 19 form the signal peptide. Asparagine 2, asparagine 23, asparagine 42, asparagine 73, asparagine 86, asparagine 100, asparagine 114, and asparagine 177 each carry an N-linked (GlcNAc...) asparagine glycan. Topologically, residues lysine 20–tyrosine 236 are extracellular. 3 cysteine pairs are disulfide-bonded: cysteine 24-cysteine 76, cysteine 31-cysteine 133, and cysteine 74-cysteine 131. One can recognise a LysM domain in the interval methionine 142–isoleucine 186. The interval tyrosine 196 to asparagine 216 is disordered. N-linked (GlcNAc...) asparagine glycans are attached at residues asparagine 218 and asparagine 225. Residues isoleucine 237 to cysteine 257 form a helical membrane-spanning segment. Topologically, residues isoleucine 258–arginine 651 are cytoplasmic. A Phosphothreonine modification is found at threonine 330. The 288-residue stretch at phenylalanine 341–leucine 628 folds into the Protein kinase domain. ATP-binding positions include leucine 347–valine 355 and lysine 368. A Phosphotyrosine modification is found at tyrosine 410. Residue aspartate 464 is the Proton acceptor of the active site. Serine 468 carries the phosphoserine modification. Threonine 500 and threonine 505 each carry phosphothreonine. Tyrosine 513 carries the post-translational modification Phosphotyrosine.

This sequence belongs to the protein kinase superfamily. Ser/Thr protein kinase family.

Its subcellular location is the cell membrane. Its function is as follows. Putative Lysin motif (LysM) receptor kinase that may recognize microbe-derived N-acetylglucosamine (NAG)-containing ligands. In Arabidopsis thaliana (Mouse-ear cress), this protein is LysM domain receptor-like kinase 3 (LYK3).